An 88-amino-acid polypeptide reads, in one-letter code: Putative membrane protein insertion efficiency factor (88 aa).

Belongs to the UPF0161 family.

The protein resides in the cell inner membrane. In terms of biological role, could be involved in insertion of integral membrane proteins into the membrane. The polypeptide is Putative membrane protein insertion efficiency factor (Burkholderia vietnamiensis (strain G4 / LMG 22486) (Burkholderia cepacia (strain R1808))).